The following is a 259-amino-acid chain: 7-cyano-7-deazaguanine synthase (259 aa).

Leucine 32–leucine 42 is an ATP binding site. The Zn(2+) site is built by cysteine 223, cysteine 233, cysteine 236, and cysteine 239.

It belongs to the QueC family. It depends on Zn(2+) as a cofactor.

It carries out the reaction 7-carboxy-7-deazaguanine + NH4(+) + ATP = 7-cyano-7-deazaguanine + ADP + phosphate + H2O + H(+). Its pathway is purine metabolism; 7-cyano-7-deazaguanine biosynthesis. Functionally, catalyzes the ATP-dependent conversion of 7-carboxy-7-deazaguanine (CDG) to 7-cyano-7-deazaguanine (preQ(0)). This Psychrobacter cryohalolentis (strain ATCC BAA-1226 / DSM 17306 / VKM B-2378 / K5) protein is 7-cyano-7-deazaguanine synthase.